Reading from the N-terminus, the 105-residue chain is Heat shock protein HspQ (105 aa).

A disordered region spans residues S74 to N105.

It belongs to the HspQ family.

It is found in the cytoplasm. In terms of biological role, involved in the degradation of certain denaturated proteins, including DnaA, during heat shock stress. The sequence is that of Heat shock protein HspQ from Citrobacter koseri (strain ATCC BAA-895 / CDC 4225-83 / SGSC4696).